Reading from the N-terminus, the 459-residue chain is Phosphomethylpyrimidine synthase (459 aa).

Substrate-binding positions include asparagine 81, methionine 110, tyrosine 140, histidine 176, 196 to 198 (SRG), 237 to 240 (DSLR), and glutamate 276. Histidine 280 is a Zn(2+) binding site. Tyrosine 303 contacts substrate. Position 344 (histidine 344) interacts with Zn(2+). Cysteine 424, cysteine 427, and cysteine 432 together coordinate [4Fe-4S] cluster.

This sequence belongs to the ThiC family. Requires [4Fe-4S] cluster as cofactor.

It carries out the reaction 5-amino-1-(5-phospho-beta-D-ribosyl)imidazole + S-adenosyl-L-methionine = 4-amino-2-methyl-5-(phosphooxymethyl)pyrimidine + CO + 5'-deoxyadenosine + formate + L-methionine + 3 H(+). It participates in cofactor biosynthesis; thiamine diphosphate biosynthesis. Its function is as follows. Catalyzes the synthesis of the hydroxymethylpyrimidine phosphate (HMP-P) moiety of thiamine from aminoimidazole ribotide (AIR) in a radical S-adenosyl-L-methionine (SAM)-dependent reaction. The sequence is that of Phosphomethylpyrimidine synthase from Gloeobacter violaceus (strain ATCC 29082 / PCC 7421).